The primary structure comprises 262 residues: Shikimate dehydrogenase (NADP(+)) (262 aa).

Shikimate-binding positions include 15–17 and Thr62; that span reads SRS. Lys66 acts as the Proton acceptor in catalysis. Glu78 lines the NADP(+) pocket. Asn87 and Asp102 together coordinate shikimate. NADP(+)-binding positions include 126–130, 150–155, and Met214; these read GAGGA and NRTLAR. Tyr216 serves as a coordination point for shikimate. Residue Gly236 coordinates NADP(+).

Belongs to the shikimate dehydrogenase family. Homodimer.

It catalyses the reaction shikimate + NADP(+) = 3-dehydroshikimate + NADPH + H(+). The protein operates within metabolic intermediate biosynthesis; chorismate biosynthesis; chorismate from D-erythrose 4-phosphate and phosphoenolpyruvate: step 4/7. In terms of biological role, involved in the biosynthesis of the chorismate, which leads to the biosynthesis of aromatic amino acids. Catalyzes the reversible NADPH linked reduction of 3-dehydroshikimate (DHSA) to yield shikimate (SA). The sequence is that of Shikimate dehydrogenase (NADP(+)) from Acinetobacter baumannii (strain ATCC 17978 / DSM 105126 / CIP 53.77 / LMG 1025 / NCDC KC755 / 5377).